The primary structure comprises 316 residues: Apolipoprotein E (316 aa).

An N-terminal signal peptide occupies residues 1–18 (MKVLWVALVITLLAGCQA). A run of 8 repeats spans residues 79–100 (VLMD…GQLG), 101–122 (PIAQ…ARLA), 123–144 (SDME…ALMG), 145–166 (QTTD…KRLL), 167–188 (RDAE…EGSE), 189–210 (RSVS…VRAA), 211–232 (TVGT…QKLR), and 233–254 (GRME…EQLE). Positions 79-254 (VLMDETMKEV…HLEEMREQLE (176 aa)) are 8 X 22 AA approximate tandem repeats. The interval 157–167 (HLRKLRKRLLR) is LDL and other lipoprotein receptors binding. 161–164 (LRKR) lines the heparin pocket. The interval 209–289 (AATVGTLASQ…SWFEPLVEDM (81 aa)) is lipid-binding and lipoprotein association. 228-235 (HQKLRGRM) serves as a coordination point for heparin. The tract at residues 265–316 (SQMRLQAEAFQARLKSWFEPLVEDMQRQWAGLVEKVQLAMATGPTSAPIENN) is homooligomerization. The tract at residues 277-289 (RLKSWFEPLVEDM) is specificity for association with VLDL.

This sequence belongs to the apolipoprotein A1/A4/E family. As to quaternary structure, homotetramer. May interact with ABCA1; functionally associated with ABCA1 in the biogenesis of HDLs. May interact with APP/A4 amyloid-beta peptide; the interaction is extremely stable in vitro but its physiological significance is unclear. May interact with MAPT. May interact with MAP2. In the cerebrospinal fluid, interacts with secreted SORL1. Interacts with PMEL; this allows the loading of PMEL luminal fragment on ILVs to induce fibril nucleation. In terms of processing, APOE exists as multiple glycosylated and sialylated glycoforms within cells and in plasma. The extent of glycosylation and sialylation are tissue and context specific. Post-translationally, glycated in plasma VLDL. Phosphorylated by FAM20C in the extracellular medium.

It localises to the secreted. It is found in the extracellular space. The protein localises to the extracellular matrix. The protein resides in the extracellular vesicle. Its subcellular location is the endosome. It localises to the multivesicular body. Functionally, APOE is an apolipoprotein, a protein associating with lipid particles, that mainly functions in lipoprotein-mediated lipid transport between organs via the plasma and interstitial fluids. APOE is a core component of plasma lipoproteins and is involved in their production, conversion and clearance. Apolipoproteins are amphipathic molecules that interact both with lipids of the lipoprotein particle core and the aqueous environment of the plasma. As such, APOE associates with chylomicrons, chylomicron remnants, very low density lipoproteins (VLDL) and intermediate density lipoproteins (IDL) but shows a preferential binding to high-density lipoproteins (HDL). It also binds a wide range of cellular receptors including the LDL receptor/LDLR and the very low-density lipoprotein receptor/VLDLR that mediate the cellular uptake of the APOE-containing lipoprotein particles. Finally, APOE also has a heparin-binding activity and binds heparan-sulfate proteoglycans on the surface of cells, a property that supports the capture and the receptor-mediated uptake of APOE-containing lipoproteins by cells. This chain is Apolipoprotein E (APOE), found in Tursiops truncatus (Atlantic bottle-nosed dolphin).